The primary structure comprises 201 residues: Recombination protein RecR (201 aa).

A C4-type zinc finger spans residues 57–72 (CADCRTFTEQEHCTIC). The region spanning 81–176 (GQICVVESPA…LASRIAHGVP (96 aa)) is the Toprim domain.

The protein belongs to the RecR family.

Functionally, may play a role in DNA repair. It seems to be involved in an RecBC-independent recombinational process of DNA repair. It may act with RecF and RecO. The chain is Recombination protein RecR from Yersinia pestis bv. Antiqua (strain Antiqua).